Consider the following 278-residue polypeptide: MADS-box transcription factor PHERES 2 (278 aa).

The 60-residue stretch at 1-60 (MKRKMKLSLIENSVSRKTTFTKRKKGMTKKLTELVTLCGVEACAVVYSPFNSIPEAWPSR) folds into the MADS-box domain.

Interacts with AGL61/DIANA and AGL62. In terms of tissue distribution, male gametophyte, embryo and endosperm.

The protein resides in the nucleus. Functionally, probable transcription factor involved in the development of gametophytes and seeds. This Arabidopsis thaliana (Mouse-ear cress) protein is MADS-box transcription factor PHERES 2 (PHE2).